The primary structure comprises 366 residues: ACP-SH:acetate ligase (366 aa).

It is found in the cytoplasm. It carries out the reaction holo-[ACP] + acetate + ATP = acetyl-[ACP] + AMP + diphosphate. In terms of biological role, acyl-carrier protein (ACP) acetate ligase of the biotin-dependent malonate decarboxylase multienzyme complex (EC 7.2.4.4). Involved in the conversion of the thiol group of the ACP-bound 2'-(5-phosphoribosyl)-3'-dephospho-CoA prosthetic group into its acetyl thioester using the energy from the hydrolysis of ATP. The polypeptide is ACP-SH:acetate ligase (madH) (Malonomonas rubra).